A 358-amino-acid chain; its full sequence is Peptide chain release factor 1 (358 aa).

The residue at position 233 (glutamine 233) is an N5-methylglutamine.

This sequence belongs to the prokaryotic/mitochondrial release factor family. Post-translationally, methylated by PrmC. Methylation increases the termination efficiency of RF1.

It is found in the cytoplasm. Functionally, peptide chain release factor 1 directs the termination of translation in response to the peptide chain termination codons UAG and UAA. This chain is Peptide chain release factor 1, found in Staphylococcus aureus (strain MRSA252).